The following is a 537-amino-acid chain: MAFNFNWSPLTADAGFYKRARDLLTTALNKSPKPPIIVDDIIVTEFNLGSVPPDLEILEIGDLAEDRFRGIFKMCYSGDAFLTLKTRVQANPLNTCLSAKPDFTSPQPLAAASSLTIPLQITLSEFKLSAFIILVFSKQKGLTIVFRNDPLESLKVSSTFDSIQFVRDYLQRTIEGKLRDLFMDELPAIIHRLSLQLWCPDQIAKEDEEPKEADEHGVNPLATPPLDAVDLHGHLLDPAAISELSLDGGPEAQLLFSQKTLLRLSDITNSQVTSSLDTSETKDVLFRAWAGPDKVDLTNTTPLATPSLARSYSYTSPHTYTFSDNGSQDQGSLPSRPSLVHLNSATAGLSLGSGRHSKAGRKKKTRVVNLRRKAETEANSEEEEDTPETDSIEPPMSEPIMPHPILEESDEELASNKVHFGRSPDLQQQPRRPSFRAQATNAPEVPVPSVELGKTAVPPLQSSEKQAARFPSQDPAFVDSKTGRPRPRSDTSSVILEQAWIMKMAGEIARRVYDEKNGNPTFWDDQDDTPPPAYEAR.

One can recognise an SMP-LTD domain in the interval 1-195 (MAFNFNWSPL…LPAIIHRLSL (195 aa)). 4 disordered regions span residues 320-339 (YTFS…RPSL), 348-403 (GLSL…IMPH), 421-493 (GRSP…DTSS), and 516-537 (KNGN…YEAR). Residues 355 to 371 (RHSKAGRKKKTRVVNLR) are compositionally biased toward basic residues. Positions 378–391 (ANSEEEEDTPETDS) are enriched in acidic residues. The segment covering 425-441 (DLQQQPRRPSFRAQATN) has biased composition (polar residues).

The protein belongs to the MDM34 family. As to quaternary structure, component of the ER-mitochondria encounter structure (ERMES) or MDM complex, composed of MMM1, MDM10, MDM12 and MDM34.

Its subcellular location is the mitochondrion outer membrane. Functionally, component of the ERMES/MDM complex, which serves as a molecular tether to connect the endoplasmic reticulum (ER) and mitochondria. Components of this complex are involved in the control of mitochondrial shape and protein biogenesis, and function in nonvesicular lipid trafficking between the ER and mitochondria. MDM34 is required for the interaction of the ER-resident membrane protein MMM1 and the outer mitochondrial membrane-resident beta-barrel protein MDM10. The polypeptide is Mitochondrial distribution and morphology protein 34 (Chaetomium globosum (strain ATCC 6205 / CBS 148.51 / DSM 1962 / NBRC 6347 / NRRL 1970) (Soil fungus)).